Reading from the N-terminus, the 395-residue chain is Phosphopentomutase (395 aa).

Positions 12, 289, 294, 330, 331, and 342 each coordinate Mn(2+).

Belongs to the phosphopentomutase family. It depends on Mn(2+) as a cofactor.

It localises to the cytoplasm. The enzyme catalyses 2-deoxy-alpha-D-ribose 1-phosphate = 2-deoxy-D-ribose 5-phosphate. It carries out the reaction alpha-D-ribose 1-phosphate = D-ribose 5-phosphate. It functions in the pathway carbohydrate degradation; 2-deoxy-D-ribose 1-phosphate degradation; D-glyceraldehyde 3-phosphate and acetaldehyde from 2-deoxy-alpha-D-ribose 1-phosphate: step 1/2. Isomerase that catalyzes the conversion of deoxy-ribose 1-phosphate (dRib-1-P) and ribose 1-phosphate (Rib-1-P) to deoxy-ribose 5-phosphate (dRib-5-P) and ribose 5-phosphate (Rib-5-P), respectively. The polypeptide is Phosphopentomutase (Levilactobacillus brevis (strain ATCC 367 / BCRC 12310 / CIP 105137 / JCM 1170 / LMG 11437 / NCIMB 947 / NCTC 947) (Lactobacillus brevis)).